Reading from the N-terminus, the 1138-residue chain is Mastermind-like protein 3 (1138 aa).

Over residues 37–48 (PNSTPAAPSSNH) the composition is skewed to polar residues. Disordered stretches follow at residues 37–68 (PNSTPAAPSSNHPAAGGCGGSGGPGGGSAAVP), 119–148 (EQRAKKSGAGTGKQQHPSKPQQDAEAASAE), 169–188 (RSPLNGDQQNGACDGNFSPT), 207–237 (PSNMPLPSASPLHQLDLKPSLPLQNSGTHTP), 334–480 (EEKK…QRAK), and 503–547 (QQQQ…PQAF). The segment covering 52–64 (GGCGGSGGPGGGS) has biased composition (gly residues). Composition is skewed to polar residues over residues 130–139 (GKQQHPSKPQ) and 173–188 (NGDQQNGACDGNFSPT). Composition is skewed to polar residues over residues 343-359 (QPATETPLSQESASVKS) and 372-394 (GSPQARPSSSGPPFSTVSTATSL). Positions 395–411 (PSVASTPAAPNPASSPA) are enriched in low complexity. Polar residues predominate over residues 414–426 (AVQSPQTPNQAHT). The span at 467–480 (QLKQMAAQQQQRAK) shows a compositional bias: low complexity. At lysine 603 the chain carries N6-acetyllysine. Disordered stretches follow at residues 615–662 (RMTP…PRAH), 691–721 (HGQEQHPVGLPRTTGPMQSSVPPGSGGMVSG), 968–991 (LQGMPGRTSGELGPFNNGASYPLQ), 1024–1084 (AAMG…SQAY), and 1090–1109 (QDVSYNYSGDGAGGSFPGLP). The segment covering 633–649 (QQQQQQQQQQQQQQQQQ) has biased composition (low complexity). Residues 1064–1084 (PPAQQQIPSGSFAPSSQSQAY) are compositionally biased toward polar residues.

It belongs to the mastermind family. As to quaternary structure, interacts through its N-terminal region with the ankyrin repeat region of the Notch proteins NOTCH1, NOTCH2, NOTCH3 and NOTCH4. Forms a DNA-binding complex with Notch proteins and RBPSUH/RBP-J kappa.

It is found in the nucleus speckle. Its function is as follows. Acts as a transcriptional coactivator for NOTCH proteins. Has been shown to amplify NOTCH-induced transcription of HES1. The chain is Mastermind-like protein 3 from Homo sapiens (Human).